The chain runs to 122 residues: Small ribosomal subunit protein uS13 (122 aa).

Positions 93–122 are disordered; the sequence is RRGLPVRGQRTKTNARTRKGPKKTIAGKKK.

It belongs to the universal ribosomal protein uS13 family. Part of the 30S ribosomal subunit. Forms a loose heterodimer with protein S19. Forms two bridges to the 50S subunit in the 70S ribosome.

Functionally, located at the top of the head of the 30S subunit, it contacts several helices of the 16S rRNA. In the 70S ribosome it contacts the 23S rRNA (bridge B1a) and protein L5 of the 50S subunit (bridge B1b), connecting the 2 subunits; these bridges are implicated in subunit movement. Contacts the tRNAs in the A and P-sites. In Corynebacterium kroppenstedtii (strain DSM 44385 / JCM 11950 / CIP 105744 / CCUG 35717), this protein is Small ribosomal subunit protein uS13.